The sequence spans 192 residues: Adenylate kinase (192 aa).

10–18 (GVPGVGGTT) provides a ligand contact to ATP.

It belongs to the archaeal adenylate kinase family. As to quaternary structure, monomer.

It is found in the cytoplasm. The enzyme catalyses AMP + ATP = 2 ADP. This is Adenylate kinase from Methanococcus maripaludis (strain C6 / ATCC BAA-1332).